The primary structure comprises 1909 residues: DENN domain-containing protein 4C (1909 aa).

One can recognise an MABP domain in the interval 40-199; that stretch reads KAPITDIAII…SVFLCYKKSV (160 aa). The 174-residue stretch at 191-364 folds into the uDENN domain; it reads VFLCYKKSVP…NIPFPSPQRP (174 aa). Residues 385–521 enclose the cDENN domain; that stretch reads PLPLSGANFS…PCKNLLSTLK (137 aa). The dDENN domain occupies 523 to 641; the sequence is LYPQLSSVHQ…CSFVSDKDTG (119 aa). Phosphoserine is present on residues Ser703, Ser737, and Ser741. Residues 821–855 form a PPR repeat; the sequence is VCYRVVMQLCGLWGHPVLAVRVLFEMKTARIKPNA. Residues Glu953, Ser965, Ser968, and Ser973 each carry the phosphoserine modification. At Thr975 the chain carries Phosphothreonine. Phosphoserine occurs at positions 989, 996, 1003, 1046, 1061, 1099, 1126, 1184, 1225, 1244, 1252, and 1278. Disordered regions lie at residues 1243–1263 and 1277–1338; these read KSPL…NRES and SSLP…HGSL. Positions 1296–1316 are enriched in polar residues; that stretch reads SSPAVSRSKTFTGRFKQQTPS. A phosphoserine mark is found at Ser1325, Ser1337, and Ser1346. The tract at residues 1419–1474 is disordered; that stretch reads SGLVPSELTQSNTSLGSSSSSGDVGKLHYPTGEVPFPRGMKGQDFEKSDHGSSQNT. Residues 1426–1440 are compositionally biased toward low complexity; sequence LTQSNTSLGSSSSSG. The segment covering 1459-1468 has biased composition (basic and acidic residues); that stretch reads KGQDFEKSDH. Residues Ser1623, Ser1627, Ser1629, Ser1640, and Ser1799 each carry the phosphoserine modification.

Phosphorylated in response to insulin.

The protein localises to the cytoplasmic vesicle membrane. The protein resides in the cell membrane. It is found in the cytoplasm. Its subcellular location is the cytosol. In terms of biological role, guanine nucleotide exchange factor (GEF) activating RAB10. Promotes the exchange of GDP to GTP, converting inactive GDP-bound RAB10 into its active GTP-bound form. Thereby, stimulates SLC2A4/GLUT4 glucose transporter-enriched vesicles delivery to the plasma membrane in response to insulin. In Homo sapiens (Human), this protein is DENN domain-containing protein 4C (DENND4C).